A 98-amino-acid chain; its full sequence is NADH-ubiquinone oxidoreductase chain 4L (98 aa).

A run of 3 helical transmembrane segments spans residues 1–21 (MTSTFIITITIFYLGLLGILI), 29–49 (ILLCLELLLISLFLSLTVWAI), and 61–81 (LILLTLSACEASAGLSLMVAL).

Belongs to the complex I subunit 4L family.

The protein localises to the mitochondrion membrane. The enzyme catalyses a ubiquinone + NADH + 5 H(+)(in) = a ubiquinol + NAD(+) + 4 H(+)(out). Functionally, core subunit of the mitochondrial membrane respiratory chain NADH dehydrogenase (Complex I) that is believed to belong to the minimal assembly required for catalysis. Complex I functions in the transfer of electrons from NADH to the respiratory chain. The immediate electron acceptor for the enzyme is believed to be ubiquinone. In Patiria pectinifera (Starfish), this protein is NADH-ubiquinone oxidoreductase chain 4L (ND4L).